Here is a 453-residue protein sequence, read N- to C-terminus: Ribosomal protein uS12 methylthiotransferase RimO (453 aa).

An MTTase N-terminal domain is found at 5-120; the sequence is PKVGFVSLGC…VMQAVHSHLP (116 aa). The [4Fe-4S] cluster site is built by Cys-14, Cys-50, Cys-79, Cys-151, Cys-155, and Cys-158. Positions 137–382 constitute a Radical SAM core domain; that stretch reads LTPRHYAYLK…MEVAEEVSAR (246 aa). The 69-residue stretch at 385 to 453 folds into the TRAM domain; the sequence is ARKVGKTLKV…ADGHDLWGEV (69 aa).

It belongs to the methylthiotransferase family. RimO subfamily. [4Fe-4S] cluster is required as a cofactor.

It localises to the cytoplasm. It carries out the reaction L-aspartate(89)-[ribosomal protein uS12]-hydrogen + (sulfur carrier)-SH + AH2 + 2 S-adenosyl-L-methionine = 3-methylsulfanyl-L-aspartate(89)-[ribosomal protein uS12]-hydrogen + (sulfur carrier)-H + 5'-deoxyadenosine + L-methionine + A + S-adenosyl-L-homocysteine + 2 H(+). In terms of biological role, catalyzes the methylthiolation of an aspartic acid residue of ribosomal protein uS12. This Burkholderia multivorans (strain ATCC 17616 / 249) protein is Ribosomal protein uS12 methylthiotransferase RimO.